The following is a 473-amino-acid chain: Photosystem II CP43 reaction center protein (473 aa).

A propeptide spanning residues 1–14 (MKTLYSLRRFYPVE) is cleaved from the precursor. N-acetylthreonine is present on T15. T15 bears the Phosphothreonine mark. 5 helical membrane passes run 69 to 93 (LFEV…PHLA), 134 to 155 (LLGP…KDRN), 178 to 200 (KALY…RKIT), 255 to 275 (KPFA…LSYS), and 291 to 312 (WFNN…ASQA). E367 contacts [CaMn4O5] cluster. A helical membrane pass occupies residues 447 to 471 (RARAAAAGFEKGIDRDFEPVLSMTP).

It belongs to the PsbB/PsbC family. PsbC subfamily. PSII is composed of 1 copy each of membrane proteins PsbA, PsbB, PsbC, PsbD, PsbE, PsbF, PsbH, PsbI, PsbJ, PsbK, PsbL, PsbM, PsbT, PsbX, PsbY, PsbZ, Psb30/Ycf12, at least 3 peripheral proteins of the oxygen-evolving complex and a large number of cofactors. It forms dimeric complexes. Binds multiple chlorophylls and provides some of the ligands for the Ca-4Mn-5O cluster of the oxygen-evolving complex. It may also provide a ligand for a Cl- that is required for oxygen evolution. PSII binds additional chlorophylls, carotenoids and specific lipids. is required as a cofactor.

It is found in the plastid. The protein localises to the chloroplast thylakoid membrane. In terms of biological role, one of the components of the core complex of photosystem II (PSII). It binds chlorophyll and helps catalyze the primary light-induced photochemical processes of PSII. PSII is a light-driven water:plastoquinone oxidoreductase, using light energy to abstract electrons from H(2)O, generating O(2) and a proton gradient subsequently used for ATP formation. This Daucus carota (Wild carrot) protein is Photosystem II CP43 reaction center protein.